Here is a 718-residue protein sequence, read N- to C-terminus: Mitochondrial potassium channel ATP-binding subunit (718 aa).

Residues 1–25 (MLVHLFRVGIRGGPFPGRLLPPLRF) constitute a mitochondrion transit peptide. Transmembrane regions (helical) follow at residues 128–148 (LLVL…NVQI), 179–199 (THLL…LVLL), and 279–299 (LLLM…GSGL). In terms of domain architecture, ABC transmembrane type-1 spans 133-420 (VAVVLALGAA…LSVLFGQVVR (288 aa)). The region spanning 455-692 (VTFQNVCFSY…GGLYAELIRR (238 aa)) is the ABC transporter domain. 490–497 (GQSGGGKT) is an ATP binding site. The segment at 697 to 718 (APRTAAPLPKKPEGPRNHQHKS) is disordered.

It belongs to the ABC transporter superfamily. ABCB family. Multidrug resistance exporter (TC 3.A.1.201) subfamily. The mitochondrial potassium channel (mitoK(ATP)) is composed of 4 subunits of CCDC51/MITOK and 4 subunits of ABCB8/MITOSUR. Physically interacts with PAAT. Interacts with Neuropilin-1 (NRP1) in mitochondria.

It is found in the mitochondrion inner membrane. Its activity is regulated as follows. Channel activity inhibited by ATP via ABCB8/MITOSUR subunit. ATP-binding subunit of the mitochondrial ATP-gated potassium channel (mitoK(ATP)). Together with pore-forming subunit CCDC51/MITOK of the mitoK(ATP) channel, mediates ATP-dependent potassium currents across the mitochondrial inner membrane. An increase in ATP intracellular levels closes the channel, inhibiting K(+) transport, whereas a decrease in ATP levels enhances K(+) uptake in the mitochondrial matrix. Plays a role in mitochondrial iron transport. Required for maintenance of normal cardiac function, possibly by influencing mitochondrial iron export and regulating the maturation of cytosolic iron sulfur cluster-containing enzymes. The polypeptide is Mitochondrial potassium channel ATP-binding subunit (ABCB8) (Pongo abelii (Sumatran orangutan)).